Here is a 591-residue protein sequence, read N- to C-terminus: Aspartate--tRNA ligase (591 aa).

Glu172 is a binding site for L-aspartate. Positions 196-199 (QLFK) are aspartate. Residue Arg218 coordinates L-aspartate. ATP is bound by residues 218–220 (RDE) and Gln227. His449 is an L-aspartate binding site. Residue Glu483 participates in ATP binding. Arg490 lines the L-aspartate pocket. 535–538 (GLDR) contributes to the ATP binding site.

This sequence belongs to the class-II aminoacyl-tRNA synthetase family. Type 1 subfamily. Homodimer.

Its subcellular location is the cytoplasm. It carries out the reaction tRNA(Asp) + L-aspartate + ATP = L-aspartyl-tRNA(Asp) + AMP + diphosphate. Its function is as follows. Catalyzes the attachment of L-aspartate to tRNA(Asp) in a two-step reaction: L-aspartate is first activated by ATP to form Asp-AMP and then transferred to the acceptor end of tRNA(Asp). The polypeptide is Aspartate--tRNA ligase (Actinobacillus pleuropneumoniae serotype 5b (strain L20)).